The chain runs to 253 residues: MMMKIVFKGKSSEYEIQRSCFCVDAFVIKDKIEERDGVDFITSNVDLLEFSDDSFTFEEIVKHFNICDTEDMIIVEDFDMKSNKDNQNQEDDIEHNILKSEKIIHENTKQTSMQFKNLKFFSRIFKNENFLSDFKESKQEVVTIKKHEKLEIFKNLSQEDQEISFVKIEILNYDSNEDSLSFNLDIFPSGMSYKYGILKGSMHIILQGKTSSTMLFPFLKSMIYKNKSENSSEKIFTLMINQKKHYKLIANLS.

This is an uncharacterized protein from Campylobacter jejuni subsp. jejuni serotype O:2 (strain ATCC 700819 / NCTC 11168).